A 216-amino-acid polypeptide reads, in one-letter code: MPTLGITDFWTYVLGVVFVILLPGPNSLFVLATSAQRGVATGYRAACGVFLGDAVLMLLSALGVASLLKAEPMLFIGLKYLGAAYLFYLGVGMLRGAWRKLRNPEATAAQAEQVDVHQPFRKALLLSLSNPKAILFFISFFIQFVDPGYAYPGLSFLVLAVILELVSALYLSFLIFTGVRLAAWFRRRQRLAAGATSGVGALFVGFGVKLATATLS.

6 helical membrane passes run 12–32 (YVLG…FVLA), 48–68 (GVFL…ASLL), 74–94 (LFIG…VGML), 134–154 (ILFF…YPGL), 156–176 (FLVL…FLIF), and 191–211 (LAAG…VKLA).

This sequence belongs to the Rht family.

It localises to the cell membrane. This is an uncharacterized protein from Pseudomonas aeruginosa (strain ATCC 15692 / DSM 22644 / CIP 104116 / JCM 14847 / LMG 12228 / 1C / PRS 101 / PAO1).